Consider the following 132-residue polypeptide: Guanyl-specific ribonuclease C2 (132 aa).

Positions 1–26 (MLYNKLITIAALLVPALAAPQGLDVR) are cleaved as a signal peptide. 2 cysteine pairs are disulfide-bonded: cysteine 28/cysteine 36 and cysteine 32/cysteine 129. The active site involves histidine 66. Glutamate 84 serves as the catalytic Proton acceptor. The Proton donor role is filled by histidine 118.

This sequence belongs to the ribonuclease N1/T1 family.

It is found in the secreted. It catalyses the reaction [RNA] containing guanosine + H2O = an [RNA fragment]-3'-guanosine-3'-phosphate + a 5'-hydroxy-ribonucleotide-3'-[RNA fragment].. The sequence is that of Guanyl-specific ribonuclease C2 from Aspergillus clavatus (strain ATCC 1007 / CBS 513.65 / DSM 816 / NCTC 3887 / NRRL 1 / QM 1276 / 107).